Here is a 91-residue protein sequence, read N- to C-terminus: Mercuric transport protein periplasmic component (91 aa).

Residues 1 to 19 (MKKLFASLALAAVVAPVWA) form the signal peptide. One can recognise an HMA domain in the interval 22-88 (QTVTLSVPGM…ATADAGYPSS (67 aa)). Cys33 and Cys36 together coordinate Hg(2+).

It belongs to the MerP family. Monomer.

The protein resides in the periplasm. Its function is as follows. Involved in mercury resistance. Acts as a mercury scavenger that specifically binds to a mercuric ion in the periplasm and probably passes it to the cytoplasmic mercuric reductase MerA via the mercuric transport protein MerT. The chain is Mercuric transport protein periplasmic component from Pseudomonas aeruginosa.